The sequence spans 100 residues: Co-chaperonin GroES (100 aa).

It belongs to the GroES chaperonin family. As to quaternary structure, heptamer of 7 subunits arranged in a ring. Interacts with the chaperonin GroEL.

It localises to the cytoplasm. Its function is as follows. Together with the chaperonin GroEL, plays an essential role in assisting protein folding. The GroEL-GroES system forms a nano-cage that allows encapsulation of the non-native substrate proteins and provides a physical environment optimized to promote and accelerate protein folding. GroES binds to the apical surface of the GroEL ring, thereby capping the opening of the GroEL channel. This chain is Co-chaperonin GroES, found in Mycobacterium marinum (strain ATCC BAA-535 / M).